Consider the following 176-residue polypeptide: Shikimate kinase (176 aa).

ATP is bound at residue 10-15; that stretch reads TSGKSS. Ser-14 contributes to the Mg(2+) binding site. Positions 32, 81, and 138 each coordinate substrate.

The protein belongs to the shikimate kinase family. In terms of assembly, monomer. Mg(2+) is required as a cofactor.

The protein localises to the cytoplasm. The catalysed reaction is shikimate + ATP = 3-phosphoshikimate + ADP + H(+). The protein operates within metabolic intermediate biosynthesis; chorismate biosynthesis; chorismate from D-erythrose 4-phosphate and phosphoenolpyruvate: step 5/7. Functionally, catalyzes the specific phosphorylation of the 3-hydroxyl group of shikimic acid using ATP as a cosubstrate. The protein is Shikimate kinase of Chlamydia pneumoniae (Chlamydophila pneumoniae).